We begin with the raw amino-acid sequence, 432 residues long: Adenylosuccinate synthetase (432 aa).

Residues 12–18 (GDEGKGK) and 40–42 (GHT) contribute to the GTP site. The active-site Proton acceptor is the Asp13. 2 residues coordinate Mg(2+): Asp13 and Gly40. IMP-binding positions include 13–16 (DEGK), 38–41 (NAGH), Thr129, Arg143, Gln224, Thr239, and Arg303. The Proton donor role is filled by His41. 299-305 (VTTGRRR) lines the substrate pocket. Residues Arg305, 331-333 (KLD), and 413-415 (GVG) each bind GTP.

It belongs to the adenylosuccinate synthetase family. As to quaternary structure, homodimer. Mg(2+) is required as a cofactor.

Its subcellular location is the cytoplasm. It carries out the reaction IMP + L-aspartate + GTP = N(6)-(1,2-dicarboxyethyl)-AMP + GDP + phosphate + 2 H(+). It participates in purine metabolism; AMP biosynthesis via de novo pathway; AMP from IMP: step 1/2. Its function is as follows. Plays an important role in the de novo pathway of purine nucleotide biosynthesis. Catalyzes the first committed step in the biosynthesis of AMP from IMP. The polypeptide is Adenylosuccinate synthetase (Mycolicibacterium paratuberculosis (strain ATCC BAA-968 / K-10) (Mycobacterium paratuberculosis)).